We begin with the raw amino-acid sequence, 194 residues long: Protein DROOPING LEAF (194 aa).

The segment at 15–42 (CTYCNTVLAVGVPCKRLMDTVTVKCGHC) adopts a C4-type zinc-finger fold. The disordered stretch occupies residues 83–103 (LVSPTSNEGSPRAPFVVKPPE).

Belongs to the YABBY family.

Its subcellular location is the nucleus. Its function is as follows. Regulates carpel specification in flower development. Severe or intermediate mutation in DL causes complete or partial homeotic conversion of carpels into stamens without affecting the identities of other floral organs. Interacts antagonistically with class B genes and controls floral meristem determinacy. Regulates midrib formation in leaves probably by inducing cell proliferation in the central region of the leaf. This chain is Protein DROOPING LEAF (DL), found in Oryza sativa subsp. japonica (Rice).